A 51-amino-acid polypeptide reads, in one-letter code: Sperm protamine P1 (51 aa).

The span at 1 to 13 (MARYRCCRSQSRS) shows a compositional bias: low complexity. The interval 1–30 (MARYRCCRSQSRSRYYRQRQRSRRRRRRSC) is disordered. Residues 14 to 30 (RYYRQRQRSRRRRRRSC) show a composition bias toward basic residues. A disulfide bridge links C40 with C48.

It belongs to the protamine P1 family. In terms of assembly, cross-linked by interchain disulfide bonds around the DNA-helix. Post-translationally, phosphorylated by SRPK1. As to expression, testis.

The protein localises to the nucleus. It is found in the chromosome. Its function is as follows. Protamines substitute for histones in the chromatin of sperm during the haploid phase of spermatogenesis. They compact sperm DNA into a highly condensed, stable and inactive complex. In Homo sapiens (Human), this protein is Sperm protamine P1 (PRM1).